We begin with the raw amino-acid sequence, 226 residues long: Transmembrane protein 204 (226 aa).

Over Met1 to Arg5 the chain is Cytoplasmic. Residues Leu6 to Phe26 traverse the membrane as a helical segment. The Extracellular portion of the chain corresponds to Thr27–Asn103. The chain crosses the membrane as a helical span at residues Leu104–Leu124. Over Pro125–Glu136 the chain is Cytoplasmic. Residues Ala137–Tyr157 form a helical membrane-spanning segment. The Extracellular portion of the chain corresponds to Arg158–Tyr170. Asn164 carries an N-linked (GlcNAc...) asparagine glycan. A helical transmembrane segment spans residues Leu171–Leu191. Residues His192–Cys226 lie on the Cytoplasmic side of the membrane.

Highly expressed in lung, heart, kidney and placenta. Lower expression in thymus, spleen, liver, testis and ovary. Expressed in endothelial and restricted epithelial cell populations.

The protein localises to the cell junction. Its subcellular location is the adherens junction. The protein resides in the cell membrane. In terms of biological role, can influence paracellular permeability. Appears to be involved in cell-cell interactions through adherens. The sequence is that of Transmembrane protein 204 (TMEM204) from Homo sapiens (Human).